The chain runs to 496 residues: Acetyltransferase adrJ (496 aa).

Active-site proton acceptor residues include histidine 174 and aspartate 421.

Belongs to the plant acyltransferase family. Monomer.

It participates in secondary metabolite biosynthesis; terpenoid biosynthesis. Its function is as follows. Acetyltransferase; part of the gene cluster that mediates the biosynthesis of andrastins, meroterpenoid compounds that exhibit inhibitory activity against ras farnesyltransferase, suggesting that they could be promising leads for antitumor agents. The first step of the pathway is the synthesis of 3,5-dimethylorsellinic acid (DMOA) by the polyketide synthase adrD via condensation of one acetyl-CoA starter unit with 3 malonyl-CoA units and 2 methylations. DMAO is then converted to farnesyl-DMAO by the prenyltransferase adrG. The methyltransferase adrK catalyzes the methylation of the carboxyl group of farnesyl-DMAO to farnesyl-DMAO methyl ester which is further converted to epoxyfarnesyl-DMAO methyl ester by the FAD-dependent monooxygenase adrH. The terpene cyclase adrI then catalyzes the carbon skeletal rearrangement to generate the andrastin E, the first compound in the pathway having the andrastin scaffold, with the tetracyclic ring system. The post-cyclization tailoring enzymes adrF, adrE, adrJ, and adrA, are involved in the conversion of andrastin E into andrastin A. The short chain dehydrogenase adrF is responsible for the oxidation of the C-3 a hydroxyl group of andrastin E to yield the corresponding ketone, andrastin D. The ketoreductase adrE stereoselectively reduces the carbonyl moiety to reverse the stereochemistry of the C-3 position to yield andrastin F. The acetyltransferase adrJ is the acetyltransferase that attaches the acetyl group to the C-3 hydroxyl group of andrastin F to yield andrastin C. Finally, the cytochrome P450 monooxygenase adrA catalyzes two sequential oxidation reactions of the C-23 methyl group, to generate the corresponding alcohol andrastin B, and aldehyde andrastin A. The polypeptide is Acetyltransferase adrJ (Penicillium roqueforti).